We begin with the raw amino-acid sequence, 228 residues long: Adapter protein MecA (228 aa).

The segment at 79–98 (GQKNDDSAADQTDDEGTDTQ) is disordered. Acidic residues predominate over residues 85 to 95 (SAADQTDDEGT).

Belongs to the MecA family. Homodimer.

Functionally, enables the recognition and targeting of unfolded and aggregated proteins to the ClpC protease or to other proteins involved in proteolysis. This Lacticaseibacillus casei (strain BL23) (Lactobacillus casei) protein is Adapter protein MecA.